Here is a 235-residue protein sequence, read N- to C-terminus: 5'-methylthioadenosine/S-adenosylhomocysteine nucleosidase (235 aa).

Glu-12 serves as the catalytic Proton acceptor. Substrate-binding positions include Gly-78, Met-153, and 174–175; that span reads ME. The Proton donor role is filled by Asp-198.

This sequence belongs to the PNP/UDP phosphorylase family. MtnN subfamily.

It carries out the reaction S-adenosyl-L-homocysteine + H2O = S-(5-deoxy-D-ribos-5-yl)-L-homocysteine + adenine. It catalyses the reaction S-methyl-5'-thioadenosine + H2O = 5-(methylsulfanyl)-D-ribose + adenine. The catalysed reaction is 5'-deoxyadenosine + H2O = 5-deoxy-D-ribose + adenine. It participates in amino-acid biosynthesis; L-methionine biosynthesis via salvage pathway; S-methyl-5-thio-alpha-D-ribose 1-phosphate from S-methyl-5'-thioadenosine (hydrolase route): step 1/2. In terms of biological role, catalyzes the irreversible cleavage of the glycosidic bond in both 5'-methylthioadenosine (MTA) and S-adenosylhomocysteine (SAH/AdoHcy) to adenine and the corresponding thioribose, 5'-methylthioribose and S-ribosylhomocysteine, respectively. Also cleaves 5'-deoxyadenosine, a toxic by-product of radical S-adenosylmethionine (SAM) enzymes, into 5-deoxyribose and adenine. In Geobacillus kaustophilus (strain HTA426), this protein is 5'-methylthioadenosine/S-adenosylhomocysteine nucleosidase.